The following is a 102-amino-acid chain: Iron-sulfur cluster assembly protein CyaY (102 aa).

This sequence belongs to the frataxin family.

Its function is as follows. Involved in iron-sulfur (Fe-S) cluster assembly. May act as a regulator of Fe-S biogenesis. This chain is Iron-sulfur cluster assembly protein CyaY, found in Actinobacillus succinogenes (strain ATCC 55618 / DSM 22257 / CCUG 43843 / 130Z).